The following is a 51-amino-acid chain: Defensin (51 aa).

3 disulfide bridges follow: cysteine 3/cysteine 31, cysteine 17/cysteine 36, and cysteine 21/cysteine 38. Phenylalanine 51 is subject to Phenylalanine amide.

It localises to the secreted. Functionally, antibacterial peptide against Gram-positive and Gram-negative bacteria and fungi. This Bombus pascuorum (Common carder bumblebee) protein is Defensin.